A 372-amino-acid polypeptide reads, in one-letter code: Riboflavin biosynthesis protein RibD (372 aa).

The region spanning methionine 1 to valine 122 is the CMP/dCMP-type deaminase domain. A deaminase region spans residues methionine 1–glycine 145. Position 50 (histidine 50) interacts with Zn(2+). Glutamate 52 (proton donor) is an active-site residue. Zn(2+) contacts are provided by cysteine 75 and cysteine 84. A reductase region spans residues isoleucine 146–serine 372. Alanine 154 is a binding site for NADP(+). Substrate is bound at residue serine 168. Residue tryptophan 170 coordinates NADP(+). Position 184 (arginine 184) interacts with substrate. Threonine 196 and aspartate 200 together coordinate NADP(+). Substrate-binding residues include leucine 204 and arginine 207. Serine 236 provides a ligand contact to NADP(+). Glutamate 301 contacts substrate. Glycine 303–serine 309 lines the NADP(+) pocket.

In the N-terminal section; belongs to the cytidine and deoxycytidylate deaminase family. It in the C-terminal section; belongs to the HTP reductase family. Zn(2+) is required as a cofactor.

It catalyses the reaction 2,5-diamino-6-hydroxy-4-(5-phosphoribosylamino)-pyrimidine + H2O + H(+) = 5-amino-6-(5-phospho-D-ribosylamino)uracil + NH4(+). The enzyme catalyses 5-amino-6-(5-phospho-D-ribitylamino)uracil + NADP(+) = 5-amino-6-(5-phospho-D-ribosylamino)uracil + NADPH + H(+). Its pathway is cofactor biosynthesis; riboflavin biosynthesis; 5-amino-6-(D-ribitylamino)uracil from GTP: step 2/4. It functions in the pathway cofactor biosynthesis; riboflavin biosynthesis; 5-amino-6-(D-ribitylamino)uracil from GTP: step 3/4. In terms of biological role, converts 2,5-diamino-6-(ribosylamino)-4(3h)-pyrimidinone 5'-phosphate into 5-amino-6-(ribosylamino)-2,4(1h,3h)-pyrimidinedione 5'-phosphate. The protein is Riboflavin biosynthesis protein RibD (ribD) of Buchnera aphidicola subsp. Baizongia pistaciae (strain Bp).